Here is a 168-residue protein sequence, read N- to C-terminus: Plastocyanin A, chloroplastic (168 aa).

A chloroplast-targeting transit peptide spans 1–69 (MATVTSAAVS…SAMIASNAMA (69 aa)). Positions 70–168 (IDVLLGADDG…AGMVGKVTVN (99 aa)) constitute a Plastocyanin-like domain. Residues histidine 106, cysteine 153, histidine 156, and methionine 161 each contribute to the Cu cation site.

Belongs to the plastocyanin family. It depends on Cu(2+) as a cofactor.

The protein localises to the plastid. Its subcellular location is the chloroplast thylakoid membrane. Its function is as follows. Participates in electron transfer between P700 and the cytochrome b6-f complex in photosystem I. This chain is Plastocyanin A, chloroplastic (PETE), found in Populus nigra (Lombardy poplar).